Reading from the N-terminus, the 224-residue chain is 7-cyano-7-deazaguanine synthase (224 aa).

Position 12–22 (12–22 (LSGGLDSSTVT)) interacts with ATP. Zn(2+) is bound by residues cysteine 193, cysteine 201, cysteine 204, and cysteine 207.

Belongs to the QueC family. Zn(2+) serves as cofactor.

It carries out the reaction 7-carboxy-7-deazaguanine + NH4(+) + ATP = 7-cyano-7-deazaguanine + ADP + phosphate + H2O + H(+). It participates in purine metabolism; 7-cyano-7-deazaguanine biosynthesis. In terms of biological role, catalyzes the ATP-dependent conversion of 7-carboxy-7-deazaguanine (CDG) to 7-cyano-7-deazaguanine (preQ(0)). This Prochlorococcus marinus (strain MIT 9301) protein is 7-cyano-7-deazaguanine synthase.